A 208-amino-acid chain; its full sequence is Proteasome subunit beta 2 (208 aa).

Residues Met-1 to Gly-14 constitute a propeptide, removed in mature form; by autocatalysis. Thr-15 functions as the Nucleophile in the catalytic mechanism.

This sequence belongs to the peptidase T1B family. As to quaternary structure, the 20S proteasome core is composed of 14 alpha and 14 beta subunits that assemble into four stacked heptameric rings, resulting in a barrel-shaped structure. The two inner rings, each composed of seven catalytic beta subunits, are sandwiched by two outer rings, each composed of seven alpha subunits. The catalytic chamber with the active sites is on the inside of the barrel. Has a gated structure, the ends of the cylinder being occluded by the N-termini of the alpha-subunits. Is capped at one or both ends by the proteasome regulatory ATPase, PAN.

Its subcellular location is the cytoplasm. It catalyses the reaction Cleavage of peptide bonds with very broad specificity.. With respect to regulation, the formation of the proteasomal ATPase PAN-20S proteasome complex, via the docking of the C-termini of PAN into the intersubunit pockets in the alpha-rings, triggers opening of the gate for substrate entry. Interconversion between the open-gate and close-gate conformations leads to a dynamic regulation of the 20S proteasome proteolysis activity. Component of the proteasome core, a large protease complex with broad specificity involved in protein degradation. In Saccharolobus solfataricus (strain ATCC 35092 / DSM 1617 / JCM 11322 / P2) (Sulfolobus solfataricus), this protein is Proteasome subunit beta 2.